The chain runs to 337 residues: ADP-ribosylation factor GTPase-activating protein AGD12 (337 aa).

An Arf-GAP domain is found at 15 to 137; the sequence is KRRIRDLLTQ…EFLKPSLRIT (123 aa). The C4-type zinc-finger motif lies at 30–53; sequence CADCGAPDPKWASANIGVFICLKC. A C2 domain is found at 164-281; it reads TNSSSQQPQL…AMAFGDPEMF (118 aa). Residues Asp250, Ser253, and Asp256 each contribute to the Ca(2+) site.

Ca(2+) is required as a cofactor. Expressed in roots, leaves, flowers and siliques. Low levels of expression in seeds and stems.

Its subcellular location is the golgi apparatus. It is found in the cell membrane. Its function is as follows. GTPase-activating protein (GAP) for ADP ribosylation factor (ARF). Binds phosphatidylinositol 3-monophosohate (PI-3-P) and anionic phospholipids. This is ADP-ribosylation factor GTPase-activating protein AGD12 (AGD12) from Arabidopsis thaliana (Mouse-ear cress).